Here is a 353-residue protein sequence, read N- to C-terminus: Ferrochelatase (353 aa).

H223 and E304 together coordinate Fe cation.

The protein belongs to the ferrochelatase family.

The protein resides in the cytoplasm. The catalysed reaction is heme b + 2 H(+) = protoporphyrin IX + Fe(2+). Its pathway is porphyrin-containing compound metabolism; protoheme biosynthesis; protoheme from protoporphyrin-IX: step 1/1. Its function is as follows. Catalyzes the ferrous insertion into protoporphyrin IX. This is Ferrochelatase from Mesorhizobium japonicum (strain LMG 29417 / CECT 9101 / MAFF 303099) (Mesorhizobium loti (strain MAFF 303099)).